The sequence spans 56 residues: MAKKKKTSQKWKLYEVKGGKVVRKNKFCPRCGPGVFMANHKDRWSCGRCGYTEWKK.

Cys-28, Cys-31, Cys-46, and Cys-49 together coordinate Zn(2+). Residues 28 to 49 form a C4-type zinc finger; that stretch reads CPRCGPGVFMANHKDRWSCGRC.

It belongs to the eukaryotic ribosomal protein eS31 family. In terms of assembly, part of the 30S ribosomal subunit. Requires Zn(2+) as cofactor.

The sequence is that of Small ribosomal subunit protein eS31 from Thermococcus gammatolerans (strain DSM 15229 / JCM 11827 / EJ3).